A 151-amino-acid chain; its full sequence is Phosphoribosyl-AMP cyclohydrolase (151 aa).

The segment covering 1-13 (MMTLTFASPPQNK) has biased composition (polar residues). The disordered stretch occupies residues 1 to 20 (MMTLTFASPPQNKSDLETGP). Asp93 is a Mg(2+) binding site. Cys94 serves as a coordination point for Zn(2+). Residues Asp95 and Asp97 each coordinate Mg(2+). Zn(2+)-binding residues include Cys112 and Cys119.

The protein belongs to the PRA-CH family. As to quaternary structure, homodimer. The cofactor is Mg(2+). It depends on Zn(2+) as a cofactor.

The protein resides in the cytoplasm. The enzyme catalyses 1-(5-phospho-beta-D-ribosyl)-5'-AMP + H2O = 1-(5-phospho-beta-D-ribosyl)-5-[(5-phospho-beta-D-ribosylamino)methylideneamino]imidazole-4-carboxamide. Its pathway is amino-acid biosynthesis; L-histidine biosynthesis; L-histidine from 5-phospho-alpha-D-ribose 1-diphosphate: step 3/9. Its function is as follows. Catalyzes the hydrolysis of the adenine ring of phosphoribosyl-AMP. This is Phosphoribosyl-AMP cyclohydrolase from Sinorhizobium medicae (strain WSM419) (Ensifer medicae).